A 337-amino-acid polypeptide reads, in one-letter code: 4-hydroxythreonine-4-phosphate dehydrogenase (337 aa).

Positions 139 and 140 each coordinate substrate. 3 residues coordinate a divalent metal cation: H173, H218, and H273. The substrate site is built by K281, N290, and R299.

It belongs to the PdxA family. As to quaternary structure, homodimer. Zn(2+) serves as cofactor. Requires Mg(2+) as cofactor. The cofactor is Co(2+).

The protein localises to the cytoplasm. It carries out the reaction 4-(phosphooxy)-L-threonine + NAD(+) = 3-amino-2-oxopropyl phosphate + CO2 + NADH. Its pathway is cofactor biosynthesis; pyridoxine 5'-phosphate biosynthesis; pyridoxine 5'-phosphate from D-erythrose 4-phosphate: step 4/5. Its function is as follows. Catalyzes the NAD(P)-dependent oxidation of 4-(phosphooxy)-L-threonine (HTP) into 2-amino-3-oxo-4-(phosphooxy)butyric acid which spontaneously decarboxylates to form 3-amino-2-oxopropyl phosphate (AHAP). The protein is 4-hydroxythreonine-4-phosphate dehydrogenase of Rhodopseudomonas palustris (strain ATCC BAA-98 / CGA009).